Here is a 316-residue protein sequence, read N- to C-terminus: Serpentine receptor class gamma-4 (316 aa).

7 helical membrane passes run Phe-21–Thr-41, Ser-50–Val-70, Ile-99–Asn-121, Met-140–Ile-160, Phe-188–Leu-208, Thr-229–Phe-249, and Ile-258–Met-278.

It belongs to the nematode receptor-like protein srg family.

The protein resides in the membrane. In Caenorhabditis elegans, this protein is Serpentine receptor class gamma-4 (srg-4).